A 160-amino-acid chain; its full sequence is Large ribosomal subunit protein uL22c (160 aa).

It belongs to the universal ribosomal protein uL22 family. As to quaternary structure, part of the 50S ribosomal subunit.

The protein localises to the plastid. It is found in the chloroplast. Its function is as follows. This protein binds specifically to 23S rRNA. Functionally, the globular domain of the protein is located near the polypeptide exit tunnel on the outside of the subunit, while an extended beta-hairpin is found that lines the wall of the exit tunnel in the center of the 70S ribosome. This is Large ribosomal subunit protein uL22c (rpl22) from Panax ginseng (Korean ginseng).